The chain runs to 131 residues: Transcription antitermination protein NusB (131 aa).

Belongs to the NusB family.

Its function is as follows. Involved in transcription antitermination. Required for transcription of ribosomal RNA (rRNA) genes. Binds specifically to the boxA antiterminator sequence of the ribosomal RNA (rrn) operons. The protein is Transcription antitermination protein NusB of Campylobacter fetus subsp. fetus (strain 82-40).